Consider the following 150-residue polypeptide: Urease accessory protein UreE (150 aa).

The protein belongs to the UreE family.

Its subcellular location is the cytoplasm. Functionally, involved in urease metallocenter assembly. Binds nickel. Probably functions as a nickel donor during metallocenter assembly. The protein is Urease accessory protein UreE of Staphylococcus epidermidis (strain ATCC 35984 / DSM 28319 / BCRC 17069 / CCUG 31568 / BM 3577 / RP62A).